A 383-amino-acid chain; its full sequence is 8-amino-7-oxononanoate synthase (383 aa).

R22 is a substrate binding site. Pyridoxal 5'-phosphate is bound at residue 109–110; sequence GF. H134 contacts substrate. Pyridoxal 5'-phosphate-binding residues include S178, H206, and T232. The residue at position 235 (K235) is an N6-(pyridoxal phosphate)lysine. T348 lines the substrate pocket.

Belongs to the class-II pyridoxal-phosphate-dependent aminotransferase family. BioF subfamily. Homodimer. It depends on pyridoxal 5'-phosphate as a cofactor.

The catalysed reaction is 6-carboxyhexanoyl-[ACP] + L-alanine + H(+) = (8S)-8-amino-7-oxononanoate + holo-[ACP] + CO2. It participates in cofactor biosynthesis; biotin biosynthesis. In terms of biological role, catalyzes the decarboxylative condensation of pimeloyl-[acyl-carrier protein] and L-alanine to produce 8-amino-7-oxononanoate (AON), [acyl-carrier protein], and carbon dioxide. This Vibrio campbellii (strain ATCC BAA-1116) protein is 8-amino-7-oxononanoate synthase.